The chain runs to 164 residues: Biotin carboxyl carrier protein of acetyl-CoA carboxylase (164 aa).

Residues 86 to 162 (GDFIVSPLVG…QFGSKLFRIV (77 aa)) form the Biotinyl-binding domain. N6-biotinyllysine is present on Lys128.

As to quaternary structure, homodimer.

It functions in the pathway lipid metabolism; fatty acid biosynthesis. In terms of biological role, this protein is a component of the acetyl coenzyme A carboxylase complex; first, biotin carboxylase catalyzes the carboxylation of the carrier protein and then the transcarboxylase transfers the carboxyl group to form malonyl-CoA. This Chlamydia trachomatis serovar D (strain ATCC VR-885 / DSM 19411 / UW-3/Cx) protein is Biotin carboxyl carrier protein of acetyl-CoA carboxylase (accB).